The following is a 400-amino-acid chain: Na(+)/H(+) antiporter NhaA (400 aa).

Transmembrane regions (helical) follow at residues alanine 26 to leucine 46, leucine 71 to valine 91, isoleucine 107 to isoleucine 127, glycine 137 to serine 157, isoleucine 166 to phenylalanine 186, histidine 189 to leucine 209, alanine 225 to isoleucine 245, phenylalanine 273 to valine 293, proline 299 to phenylalanine 319, isoleucine 340 to leucine 360, and leucine 373 to leucine 393.

The protein belongs to the NhaA Na(+)/H(+) (TC 2.A.33) antiporter family.

The protein localises to the cell inner membrane. It carries out the reaction Na(+)(in) + 2 H(+)(out) = Na(+)(out) + 2 H(+)(in). Na(+)/H(+) antiporter that extrudes sodium in exchange for external protons. This chain is Na(+)/H(+) antiporter NhaA, found in Haemophilus influenzae (strain ATCC 51907 / DSM 11121 / KW20 / Rd).